We begin with the raw amino-acid sequence, 273 residues long: Nitrogenase iron protein 4 (273 aa).

Position 8–15 (8–15) interacts with ATP; sequence GKGGIGKS. Position 94 (Cys-94) interacts with [4Fe-4S] cluster. Residue Arg-97 is modified to ADP-ribosylarginine; by dinitrogenase reductase ADP-ribosyltransferase. Cys-129 contributes to the [4Fe-4S] cluster binding site.

It belongs to the NifH/BchL/ChlL family. Homodimer. Requires [4Fe-4S] cluster as cofactor. In terms of processing, the reversible ADP-ribosylation of Arg-97 inactivates the nitrogenase reductase and regulates nitrogenase activity.

The catalysed reaction is N2 + 8 reduced [2Fe-2S]-[ferredoxin] + 16 ATP + 16 H2O = H2 + 8 oxidized [2Fe-2S]-[ferredoxin] + 2 NH4(+) + 16 ADP + 16 phosphate + 6 H(+). Functionally, the key enzymatic reactions in nitrogen fixation are catalyzed by the nitrogenase complex, which has 2 components: the iron protein and the molybdenum-iron protein. This chain is Nitrogenase iron protein 4 (nifH4), found in Clostridium pasteurianum.